The sequence spans 1112 residues: DNA polymerase II large subunit (1112 aa).

The protein belongs to the archaeal DNA polymerase II family. Heterodimer of a large subunit and a small subunit.

The enzyme catalyses DNA(n) + a 2'-deoxyribonucleoside 5'-triphosphate = DNA(n+1) + diphosphate. It catalyses the reaction Exonucleolytic cleavage in the 3'- to 5'-direction to yield nucleoside 5'-phosphates.. Possesses two activities: a DNA synthesis (polymerase) and an exonucleolytic activity that degrades single-stranded DNA in the 3'- to 5'-direction. Has a template-primer preference which is characteristic of a replicative DNA polymerase. This is DNA polymerase II large subunit from Cenarchaeum symbiosum (strain A).